The sequence spans 855 residues: DNA mismatch repair protein MutS (855 aa).

An ATP-binding site is contributed by 618 to 625; sequence GPNMGGKS.

The protein belongs to the DNA mismatch repair MutS family.

This protein is involved in the repair of mismatches in DNA. It is possible that it carries out the mismatch recognition step. This protein has a weak ATPase activity. This chain is DNA mismatch repair protein MutS, found in Shewanella loihica (strain ATCC BAA-1088 / PV-4).